Reading from the N-terminus, the 367-residue chain is Flagellar P-ring protein (367 aa).

Positions Met-1–Ala-18 are cleaved as a signal peptide.

This sequence belongs to the FlgI family. In terms of assembly, the basal body constitutes a major portion of the flagellar organelle and consists of four rings (L,P,S, and M) mounted on a central rod.

The protein resides in the periplasm. It is found in the bacterial flagellum basal body. Functionally, assembles around the rod to form the L-ring and probably protects the motor/basal body from shearing forces during rotation. This is Flagellar P-ring protein from Rhizorhabdus wittichii (strain DSM 6014 / CCUG 31198 / JCM 15750 / NBRC 105917 / EY 4224 / RW1) (Sphingomonas wittichii).